The chain runs to 98 residues: NADH-ubiquinone oxidoreductase chain 4L (98 aa).

The next 3 membrane-spanning stretches (helical) occupy residues 1 to 21 (MSLT…GLLM), 29 to 49 (SLLC…MTIL), and 61 to 81 (IILL…LVMV).

It belongs to the complex I subunit 4L family. As to quaternary structure, core subunit of respiratory chain NADH dehydrogenase (Complex I) which is composed of 45 different subunits.

It localises to the mitochondrion inner membrane. It catalyses the reaction a ubiquinone + NADH + 5 H(+)(in) = a ubiquinol + NAD(+) + 4 H(+)(out). In terms of biological role, core subunit of the mitochondrial membrane respiratory chain NADH dehydrogenase (Complex I) which catalyzes electron transfer from NADH through the respiratory chain, using ubiquinone as an electron acceptor. Part of the enzyme membrane arm which is embedded in the lipid bilayer and involved in proton translocation. This chain is NADH-ubiquinone oxidoreductase chain 4L (MT-ND4L), found in Chiroderma trinitatum (Little big-eyed bat).